Consider the following 400-residue polypeptide: U-box domain-containing protein 37 (400 aa).

A coiled-coil region spans residues 229–298; that stretch reads KEWESAYLEE…RKAKEERDLL (70 aa). The region spanning 324-398 is the U-box domain; it reads EAPQYFICPI…QEWLHASSSF (75 aa).

The catalysed reaction is S-ubiquitinyl-[E2 ubiquitin-conjugating enzyme]-L-cysteine + [acceptor protein]-L-lysine = [E2 ubiquitin-conjugating enzyme]-L-cysteine + N(6)-ubiquitinyl-[acceptor protein]-L-lysine.. It participates in protein modification; protein ubiquitination. Its function is as follows. Functions as an E3 ubiquitin ligase. In Arabidopsis thaliana (Mouse-ear cress), this protein is U-box domain-containing protein 37 (PUB37).